We begin with the raw amino-acid sequence, 405 residues long: Imidazolonepropionase (405 aa).

2 residues coordinate Fe(3+): H70 and H72. Zn(2+) is bound by residues H70 and H72. Positions 79, 142, and 175 each coordinate 4-imidazolone-5-propanoate. Y142 is an N-formimidoyl-L-glutamate binding site. H240 lines the Fe(3+) pocket. H240 is a Zn(2+) binding site. Q243 is a 4-imidazolone-5-propanoate binding site. D315 lines the Fe(3+) pocket. Residue D315 coordinates Zn(2+). N-formimidoyl-L-glutamate-binding residues include N317 and G319. Position 320 (S320) interacts with 4-imidazolone-5-propanoate.

It belongs to the metallo-dependent hydrolases superfamily. HutI family. It depends on Zn(2+) as a cofactor. Requires Fe(3+) as cofactor.

The protein resides in the cytoplasm. It catalyses the reaction 4-imidazolone-5-propanoate + H2O = N-formimidoyl-L-glutamate. Its pathway is amino-acid degradation; L-histidine degradation into L-glutamate; N-formimidoyl-L-glutamate from L-histidine: step 3/3. Its function is as follows. Catalyzes the hydrolytic cleavage of the carbon-nitrogen bond in imidazolone-5-propanoate to yield N-formimidoyl-L-glutamate. It is the third step in the universal histidine degradation pathway. The protein is Imidazolonepropionase of Ruegeria sp. (strain TM1040) (Silicibacter sp.).